A 222-amino-acid chain; its full sequence is Large ribosomal subunit protein mL64 (222 aa).

Disordered regions lie at residues arginine 21 to threonine 47 and glutamine 186 to serine 222. A coiled-coil region spans residues threonine 98–alanine 207. A Nuclear localization signal motif is present at residues lysine 184–glutamate 200. Residues glutamine 186 to arginine 202 show a composition bias toward basic and acidic residues. Positions isoleucine 203–alanine 215 are enriched in low complexity.

The protein belongs to the mitochondrion-specific ribosomal protein mL64 family. Component of the mitochondrial ribosome large subunit (39S) which comprises a 16S rRNA and about 50 distinct proteins. Interacts with GADD45A, GADD45B and GADD45G. Interacts with NR4A1 via the NR4A1 AB domain. Interacts with ATAD3A and ATAD3B.

It is found in the mitochondrion. The protein localises to the nucleus. Functionally, acts as a negative regulator of G1 to S cell cycle phase progression by inhibiting cyclin-dependent kinases. Inhibitory effects are additive with GADD45 proteins but also occur in the absence of GADD45 proteins. Acts as a repressor of the orphan nuclear receptor NR4A1 by inhibiting AB domain-mediated transcriptional activity. May be involved in the hormone-mediated regulation of NR4A1 transcriptional activity. May play a role in mitochondrial protein synthesis. The chain is Large ribosomal subunit protein mL64 (Gadd45gip1) from Mus musculus (Mouse).